The sequence spans 179 residues: Hypoxanthine-guanine phosphoribosyltransferase (179 aa).

Diphosphate contacts are provided by Lys-42 and Gly-43. Residues Glu-98 and Asp-99 each contribute to the Mg(2+) site. The Proton acceptor role is filled by Glu-102. GMP-binding positions include Lys-130, 151–152 (FV), and Asp-158. Arg-164 is a diphosphate binding site.

The protein belongs to the purine/pyrimidine phosphoribosyltransferase family. It depends on Mg(2+) as a cofactor.

It is found in the cytoplasm. The catalysed reaction is IMP + diphosphate = hypoxanthine + 5-phospho-alpha-D-ribose 1-diphosphate. It carries out the reaction GMP + diphosphate = guanine + 5-phospho-alpha-D-ribose 1-diphosphate. Its pathway is purine metabolism; IMP biosynthesis via salvage pathway; IMP from hypoxanthine: step 1/1. The protein operates within purine metabolism; GMP biosynthesis via salvage pathway; GMP from guanine: step 1/1. Its function is as follows. Purine salvage pathway enzyme that catalyzes the transfer of the ribosyl-5-phosphate group from 5-phospho-alpha-D-ribose 1-diphosphate (PRPP) to the N9 position of the 6-oxopurines hypoxanthine and guanine to form the corresponding ribonucleotides IMP (inosine 5'-monophosphate) and GMP (guanosine 5'-monophosphate), with the release of PPi. This is Hypoxanthine-guanine phosphoribosyltransferase (hpt) from Staphylococcus epidermidis (strain ATCC 35984 / DSM 28319 / BCRC 17069 / CCUG 31568 / BM 3577 / RP62A).